Consider the following 456-residue polypeptide: Bifunctional protein GlmU (456 aa).

Positions 1–229 (MYKCALILAA…FEEILGVNSR (229 aa)) are pyrophosphorylase. UDP-N-acetyl-alpha-D-glucosamine contacts are provided by residues 8-11 (LAAG), K22, Q73, and 78-79 (GT). D103 contributes to the Mg(2+) binding site. Residues G140, E155, N170, and N227 each coordinate UDP-N-acetyl-alpha-D-glucosamine. Residue N227 participates in Mg(2+) binding. The segment at 230–250 (LQLCQVGKVMQKRINEKHMEN) is linker. The N-acetyltransferase stretch occupies residues 251–456 (GSTLIDPDNT…GWVDKKGLLK (206 aa)). UDP-N-acetyl-alpha-D-glucosamine-binding residues include R332 and K350. The Proton acceptor role is filled by H362. UDP-N-acetyl-alpha-D-glucosamine contacts are provided by Y365 and N376. Residues 385-386 (NY), A422, and R439 each bind acetyl-CoA.

It in the N-terminal section; belongs to the N-acetylglucosamine-1-phosphate uridyltransferase family. The protein in the C-terminal section; belongs to the transferase hexapeptide repeat family. As to quaternary structure, homotrimer. It depends on Mg(2+) as a cofactor.

Its subcellular location is the cytoplasm. It carries out the reaction alpha-D-glucosamine 1-phosphate + acetyl-CoA = N-acetyl-alpha-D-glucosamine 1-phosphate + CoA + H(+). The catalysed reaction is N-acetyl-alpha-D-glucosamine 1-phosphate + UTP + H(+) = UDP-N-acetyl-alpha-D-glucosamine + diphosphate. Its pathway is nucleotide-sugar biosynthesis; UDP-N-acetyl-alpha-D-glucosamine biosynthesis; N-acetyl-alpha-D-glucosamine 1-phosphate from alpha-D-glucosamine 6-phosphate (route II): step 2/2. The protein operates within nucleotide-sugar biosynthesis; UDP-N-acetyl-alpha-D-glucosamine biosynthesis; UDP-N-acetyl-alpha-D-glucosamine from N-acetyl-alpha-D-glucosamine 1-phosphate: step 1/1. It functions in the pathway bacterial outer membrane biogenesis; LPS lipid A biosynthesis. Catalyzes the last two sequential reactions in the de novo biosynthetic pathway for UDP-N-acetylglucosamine (UDP-GlcNAc). The C-terminal domain catalyzes the transfer of acetyl group from acetyl coenzyme A to glucosamine-1-phosphate (GlcN-1-P) to produce N-acetylglucosamine-1-phosphate (GlcNAc-1-P), which is converted into UDP-GlcNAc by the transfer of uridine 5-monophosphate (from uridine 5-triphosphate), a reaction catalyzed by the N-terminal domain. This Clostridium acetobutylicum (strain ATCC 824 / DSM 792 / JCM 1419 / IAM 19013 / LMG 5710 / NBRC 13948 / NRRL B-527 / VKM B-1787 / 2291 / W) protein is Bifunctional protein GlmU.